Reading from the N-terminus, the 879-residue chain is Alanine--tRNA ligase (879 aa).

Positions 566, 570, 668, and 672 each coordinate Zn(2+).

This sequence belongs to the class-II aminoacyl-tRNA synthetase family. It depends on Zn(2+) as a cofactor.

The protein resides in the cytoplasm. The catalysed reaction is tRNA(Ala) + L-alanine + ATP = L-alanyl-tRNA(Ala) + AMP + diphosphate. Functionally, catalyzes the attachment of alanine to tRNA(Ala) in a two-step reaction: alanine is first activated by ATP to form Ala-AMP and then transferred to the acceptor end of tRNA(Ala). Also edits incorrectly charged Ser-tRNA(Ala) and Gly-tRNA(Ala) via its editing domain. The chain is Alanine--tRNA ligase from Clostridium botulinum (strain Hall / ATCC 3502 / NCTC 13319 / Type A).